Here is a 1072-residue protein sequence, read N- to C-terminus: DNA-directed RNA polymerase subunit beta (1072 aa).

It belongs to the RNA polymerase beta chain family. In terms of assembly, in plastids the minimal PEP RNA polymerase catalytic core is composed of four subunits: alpha, beta, beta', and beta''. When a (nuclear-encoded) sigma factor is associated with the core the holoenzyme is formed, which can initiate transcription.

The protein resides in the plastid. The protein localises to the chloroplast. The enzyme catalyses RNA(n) + a ribonucleoside 5'-triphosphate = RNA(n+1) + diphosphate. Its function is as follows. DNA-dependent RNA polymerase catalyzes the transcription of DNA into RNA using the four ribonucleoside triphosphates as substrates. This Arabidopsis thaliana (Mouse-ear cress) protein is DNA-directed RNA polymerase subunit beta.